A 149-amino-acid polypeptide reads, in one-letter code: Large ribosomal subunit protein bL9 (149 aa).

Belongs to the bacterial ribosomal protein bL9 family.

Binds to the 23S rRNA. The polypeptide is Large ribosomal subunit protein bL9 (Bacillus velezensis (strain DSM 23117 / BGSC 10A6 / LMG 26770 / FZB42) (Bacillus amyloliquefaciens subsp. plantarum)).